A 507-amino-acid chain; its full sequence is Cytochrome P450 monooxygenase cloA (507 aa).

A helical membrane pass occupies residues 15-35 (WTWILLTTCIALTSPLVLKGI). N247 carries N-linked (GlcNAc...) asparagine glycosylation. C450 serves as a coordination point for heme.

The protein belongs to the cytochrome P450 family. It depends on heme as a cofactor.

The protein resides in the membrane. It functions in the pathway alkaloid biosynthesis; ergot alkaloid biosynthesis. Its function is as follows. Cytochrome P450 monooxygenase; part of the gene cluster that mediates the biosynthesis of fungal ergot alkaloid. DmaW catalyzes the first step of ergot alkaloid biosynthesis by condensing dimethylallyl diphosphate (DMAP) and tryptophan to form 4-dimethylallyl-L-tryptophan. The second step is catalyzed by the methyltransferase easF that methylates 4-dimethylallyl-L-tryptophan in the presence of S-adenosyl-L-methionine, resulting in the formation of 4-dimethylallyl-L-abrine. The catalase easC and the FAD-dependent oxidoreductase easE then transform 4-dimethylallyl-L-abrine to chanoclavine-I which is further oxidized by easD in the presence of NAD(+), resulting in the formation of chanoclavine-I aldehyde. Agroclavine dehydrogenase easG then mediates the conversion of chanoclavine-I aldehyde to agroclavine via a non-enzymatic adduct reaction: the substrate is an iminium intermediate that is formed spontaneously from chanoclavine-I aldehyde in the presence of glutathione. The presence of easA is not required to complete this reaction. Further conversion of agroclavine to paspalic acid is a two-step process involving oxidation of agroclavine to elymoclavine and of elymoclavine to paspalic acid, the second step being performed by the elymoclavine oxidase cloA. Paspalic acid is then further converted to D-lysergic acid. Ergopeptines are assembled from D-lysergic acid and three different amino acids by the D-lysergyl-peptide-synthetases composed each of a monomudular and a trimodular nonribosomal peptide synthetase subunit. LpsB and lpsC encode the monomodular subunits responsible for D-lysergic acid activation and incorporation into the ergopeptine backbone. LpsA1 and A2 subunits encode the trimodular nonribosomal peptide synthetase assembling the tripeptide portion of ergopeptines. LpsA1 is responsible for formation of the major ergopeptine, ergotamine, and lpsA2 for alpha-ergocryptine, the minor ergopeptine of the total alkaloid mixture elaborated by C.purpurea. D-lysergyl-tripeptides are assembled by the nonribosomal peptide synthetases and released as N-(D-lysergyl-aminoacyl)-lactams. Cyclolization of the D-lysergyl-tripeptides is performed by the Fe(2+)/2-ketoglutarate-dependent dioxygenase easH which introduces a hydroxyl group into N-(D-lysergyl-aminoacyl)-lactam at alpha-C of the aminoacyl residue followed by spontaneous condensation with the terminal lactam carbonyl group. This Claviceps purpurea (Ergot fungus) protein is Cytochrome P450 monooxygenase cloA.